A 415-amino-acid chain; its full sequence is Carboxypeptidase B (415 aa).

The first 13 residues, 1 to 13 (MLLLLALVSVALA), serve as a signal peptide directing secretion. Positions 14 to 108 (HASEEHFDGN…LESQFDSHTR (95 aa)) are cleaved as a propeptide — activation peptide. The Peptidase M14 domain maps to 116–410 (KYNKWETIEA…LAVKYIANYV (295 aa)). C171 and C184 form a disulfide bridge. H174 and E177 together coordinate Zn(2+). Residues 174-177 (HARE), R232, and 249-250 (NR) each bind substrate. Intrachain disulfides connect C243/C266 and C257/C271. Residue H302 coordinates Zn(2+). Substrate is bound by residues 303–304 (SY) and Y354. The active-site Proton donor/acceptor is E376.

The protein belongs to the peptidase M14 family. Zn(2+) is required as a cofactor.

It localises to the secreted. The protein resides in the zymogen granule lumen. The enzyme catalyses Preferential release of a C-terminal lysine or arginine amino acid.. In Rattus norvegicus (Rat), this protein is Carboxypeptidase B (Cpb1).